Consider the following 86-residue polypeptide: Large ribosomal subunit protein bL31B (86 aa).

The protein belongs to the bacterial ribosomal protein bL31 family. Type B subfamily. In terms of assembly, part of the 50S ribosomal subunit.

This is Large ribosomal subunit protein bL31B from Chloroherpeton thalassium (strain ATCC 35110 / GB-78).